A 295-amino-acid chain; its full sequence is Polyadenylate-binding protein 2-B (295 aa).

Residues 1–102 (MAAVSSVASL…EEPGELTGDQ (102 aa)) form a disordered region. Composition is skewed to gly residues over residues 19-31 (LRGG…GGQD) and 71-81 (GRGGSGGGAGG). The span at 83–96 (EELEDEELEEEEPG) shows a compositional bias: acidic residues. Residues 106–140 (DPELEAIKARVREMEEEAEKLKELQNEVEKQMNMS) are a coiled coil. Residues 145–295 (NAGPVIMSVE…ARATSWYTPY (151 aa)) are necessary for homooligomerization. Residues 162–239 (RSIYVGNVDY…RQIKVVPKRT (78 aa)) form the RRM domain.

As to quaternary structure, monomer and homooligomer. Binds RNA as a monomer and oligomerizes when bound to poly(A).

The protein resides in the nucleus. The protein localises to the cytoplasm. In terms of biological role, involved in the 3'-end formation of mRNA precursors (pre-mRNA) by the addition of a poly(A) tail of 200-250 nt to the upstream cleavage product. Stimulates poly(A) polymerase (PAPOLA) conferring processivity on the poly(A) tail elongation reaction and also controls the poly(A) tail length. Increases the affinity of poly(A) polymerase for RNA. Binds to poly(A) and to poly(G) with high affinity. May protect the poly(A) tail from degradation. The polypeptide is Polyadenylate-binding protein 2-B (pabpn1-b) (Xenopus laevis (African clawed frog)).